The primary structure comprises 245 residues: uncharacterized protein (245 aa).

A signal peptide spans 1 to 18; sequence MKSAAILALLAQALAVTA. The tract at residues 21–66 is disordered; it reads VEGDRTPGTRTLDLPNFPGGSVPTRGVEKRADLPPDNGGGNAPDPD. Residues N189 and N225 are each glycosylated (N-linked (GlcNAc...) asparagine).

The protein resides in the secreted. This is an uncharacterized protein from Arthroderma benhamiae (strain ATCC MYA-4681 / CBS 112371) (Trichophyton mentagrophytes).